Here is a 206-residue protein sequence, read N- to C-terminus: Large ribosomal subunit protein uL4 (206 aa).

Residues 63–97 are disordered; it reads MYKQKGTGRARHHSARAPQFRGGGKAHGPVVRSHE. A compositionally biased stretch (basic residues) spans 64 to 77; that stretch reads YKQKGTGRARHHSA.

This sequence belongs to the universal ribosomal protein uL4 family. In terms of assembly, part of the 50S ribosomal subunit.

Its function is as follows. One of the primary rRNA binding proteins, this protein initially binds near the 5'-end of the 23S rRNA. It is important during the early stages of 50S assembly. It makes multiple contacts with different domains of the 23S rRNA in the assembled 50S subunit and ribosome. Forms part of the polypeptide exit tunnel. The polypeptide is Large ribosomal subunit protein uL4 (Rhizobium etli (strain ATCC 51251 / DSM 11541 / JCM 21823 / NBRC 15573 / CFN 42)).